Reading from the N-terminus, the 137-residue chain is Small ribosomal subunit protein bS6 (137 aa).

Residues 113–137 form a disordered region; it reads EEQREKKNFRKPFIKREEAATKENK. The span at 126-137 shows a compositional bias: basic and acidic residues; that stretch reads IKREEAATKENK.

The protein belongs to the bacterial ribosomal protein bS6 family.

In terms of biological role, binds together with bS18 to 16S ribosomal RNA. The chain is Small ribosomal subunit protein bS6 from Mycoplasma capricolum subsp. capricolum (strain California kid / ATCC 27343 / NCTC 10154).